The chain runs to 135 residues: Large ribosomal subunit protein bL19 (135 aa).

Belongs to the bacterial ribosomal protein bL19 family.

Its function is as follows. This protein is located at the 30S-50S ribosomal subunit interface and may play a role in the structure and function of the aminoacyl-tRNA binding site. The sequence is that of Large ribosomal subunit protein bL19 from Xanthomonas oryzae pv. oryzae (strain KACC10331 / KXO85).